The chain runs to 347 residues: UDP-3-O-acylglucosamine N-acyltransferase (347 aa).

The Proton acceptor role is filled by His240.

This sequence belongs to the transferase hexapeptide repeat family. LpxD subfamily. As to quaternary structure, homotrimer.

It catalyses the reaction a UDP-3-O-[(3R)-3-hydroxyacyl]-alpha-D-glucosamine + a (3R)-hydroxyacyl-[ACP] = a UDP-2-N,3-O-bis[(3R)-3-hydroxyacyl]-alpha-D-glucosamine + holo-[ACP] + H(+). Its pathway is bacterial outer membrane biogenesis; LPS lipid A biosynthesis. Functionally, catalyzes the N-acylation of UDP-3-O-acylglucosamine using 3-hydroxyacyl-ACP as the acyl donor. Is involved in the biosynthesis of lipid A, a phosphorylated glycolipid that anchors the lipopolysaccharide to the outer membrane of the cell. In Hydrogenovibrio crunogenus (strain DSM 25203 / XCL-2) (Thiomicrospira crunogena), this protein is UDP-3-O-acylglucosamine N-acyltransferase.